Consider the following 187-residue polypeptide: uncharacterized protein (187 aa).

Positions 1–17 (MYAGGRVVRSAFARGKV) are cleaved as a signal peptide. A lipid anchor (N-palmitoyl cysteine) is attached at C18. C18 is lipidated: S-diacylglycerol cysteine.

Its subcellular location is the cell membrane. This is an uncharacterized protein from Treponema pallidum (strain Nichols).